The primary structure comprises 403 residues: Homoserine O-succinyltransferase (403 aa).

The region spanning 58-366 (NAVLICHALS…ESNHGHDAFL (309 aa)) is the AB hydrolase-1 domain. Ser-164 (nucleophile) is an active-site residue. Arg-234 is a binding site for substrate. Residues Asp-329 and His-362 contribute to the active site. Asp-363 lines the substrate pocket.

Belongs to the AB hydrolase superfamily. MetX family. In terms of assembly, homodimer.

It localises to the cytoplasm. The catalysed reaction is L-homoserine + succinyl-CoA = O-succinyl-L-homoserine + CoA. It participates in amino-acid biosynthesis; L-methionine biosynthesis via de novo pathway; O-succinyl-L-homoserine from L-homoserine: step 1/1. In terms of biological role, transfers a succinyl group from succinyl-CoA to L-homoserine, forming succinyl-L-homoserine. The chain is Homoserine O-succinyltransferase from Halothiobacillus neapolitanus (strain ATCC 23641 / c2) (Thiobacillus neapolitanus).